A 446-amino-acid chain; its full sequence is Amino-acid acetyltransferase (446 aa).

The N-acetyltransferase domain maps to 299 to 438 (EQVRDAEIDD…QKLYNFQRKS (140 aa)).

The protein belongs to the acetyltransferase family. ArgA subfamily.

Its subcellular location is the cytoplasm. It carries out the reaction L-glutamate + acetyl-CoA = N-acetyl-L-glutamate + CoA + H(+). Its pathway is amino-acid biosynthesis; L-arginine biosynthesis; N(2)-acetyl-L-ornithine from L-glutamate: step 1/4. The protein is Amino-acid acetyltransferase of Aliivibrio fischeri (strain ATCC 700601 / ES114) (Vibrio fischeri).